Reading from the N-terminus, the 290-residue chain is Tubulin beta-4B chain (290 aa).

An MREI motif motif is present at residues 1-4 (MREI). Gln-11 serves as a coordination point for GTP. Phosphothreonine is present on Thr-55. Lys-58 carries the N6-acetyllysine modification. GTP-binding residues include Glu-69, Ser-138, Gly-142, Thr-143, Gly-144, and Asn-172. Glu-69 is a binding site for Mg(2+).

Belongs to the tubulin family. In terms of assembly, dimer of alpha and beta chains. A typical microtubule is a hollow water-filled tube with an outer diameter of 25 nm and an inner diameter of 15 nM. Alpha-beta heterodimers associate head-to-tail to form protofilaments running lengthwise along the microtubule wall with the beta-tubulin subunit facing the microtubule plus end conferring a structural polarity. Microtubules usually have 13 protofilaments but different protofilament numbers can be found in some organisms and specialized cells. Component of sperm flagellar doublet microtubules. Mg(2+) is required as a cofactor. In terms of processing, some glutamate residues at the C-terminus are polyglycylated, resulting in polyglycine chains on the gamma-carboxyl group. Glycylation is mainly limited to tubulin incorporated into axonemes (cilia and flagella) whereas glutamylation is prevalent in neuronal cells, centrioles, axonemes, and the mitotic spindle. Both modifications can coexist on the same protein on adjacent residues, and lowering polyglycylation levels increases polyglutamylation, and reciprocally. Cilia and flagella glycylation is required for their stability and maintenance. Flagella glycylation controls sperm motility. Post-translationally, some glutamate residues at the C-terminus are polyglutamylated, resulting in polyglutamate chains on the gamma-carboxyl group. Polyglutamylation plays a key role in microtubule severing by spastin (SPAST). SPAST preferentially recognizes and acts on microtubules decorated with short polyglutamate tails: severing activity by SPAST increases as the number of glutamates per tubulin rises from one to eight, but decreases beyond this glutamylation threshold. Glutamylation is also involved in cilia motility.

It localises to the cytoplasm. It is found in the cytoskeleton. Its subcellular location is the flagellum axoneme. Functionally, tubulin is the major constituent of microtubules, a cylinder consisting of laterally associated linear protofilaments composed of alpha- and beta-tubulin heterodimers. Microtubules grow by the addition of GTP-tubulin dimers to the microtubule end, where a stabilizing cap forms. Below the cap, tubulin dimers are in GDP-bound state, owing to GTPase activity of alpha-tubulin. In Mesocricetus auratus (Golden hamster), this protein is Tubulin beta-4B chain (TUBB4B).